Reading from the N-terminus, the 160-residue chain is Anaerobic nitrite reductase HBII (160 aa).

In terms of domain architecture, Globin spans 8 to 157 (GFTEEQEALV…LVAAIKLEMK (150 aa)). Positions 41–45 (EIAPS) match the Homodimerization motif. 6 residues coordinate heme b: serine 51, lysine 65, histidine 69, lysine 99, serine 103, and histidine 104. The short motif at 111–123 (DEHFEVTKFALLE) is the Homodimerization element.

The protein belongs to the plant globin family. In terms of assembly, homodimer. Heme b is required as a cofactor.

The protein resides in the cytoplasm. The protein localises to the nucleus. It catalyses the reaction Fe(III)-heme b-[protein] + nitric oxide + H2O = Fe(II)-heme b-[protein] + nitrite + 2 H(+). Phytoglobin that reduces nitrite to nitric oxide (NO) under anoxic conditions (e.g. during flooding or in waterlogged soil) and upon root nodulation. Required for general plant development and during nodulation, especially for the onset of symbiosis. Monitors nitric oxide (NO) levels during early phase of the nitrogen-fixing symbiosis and buffers oxygen in functioning nodules. May not function as an oxygen storage or transport protein. Has an unusually high affinity for O(2) through a hexacoordinate heme iron because of a very low dissociation constant. The polypeptide is Anaerobic nitrite reductase HBII (Casuarina glauca (Swamp oak)).